Reading from the N-terminus, the 210-residue chain is Imidazole glycerol phosphate synthase subunit HisH (210 aa).

Residues 3–210 (TIAIIDYGMG…ILKNFALSKA (208 aa)) enclose the Glutamine amidotransferase type-1 domain. Cysteine 81 serves as the catalytic Nucleophile. Catalysis depends on residues histidine 190 and glutamate 192.

As to quaternary structure, heterodimer of HisH and HisF.

Its subcellular location is the cytoplasm. It carries out the reaction 5-[(5-phospho-1-deoxy-D-ribulos-1-ylimino)methylamino]-1-(5-phospho-beta-D-ribosyl)imidazole-4-carboxamide + L-glutamine = D-erythro-1-(imidazol-4-yl)glycerol 3-phosphate + 5-amino-1-(5-phospho-beta-D-ribosyl)imidazole-4-carboxamide + L-glutamate + H(+). The enzyme catalyses L-glutamine + H2O = L-glutamate + NH4(+). Its pathway is amino-acid biosynthesis; L-histidine biosynthesis; L-histidine from 5-phospho-alpha-D-ribose 1-diphosphate: step 5/9. Functionally, IGPS catalyzes the conversion of PRFAR and glutamine to IGP, AICAR and glutamate. The HisH subunit catalyzes the hydrolysis of glutamine to glutamate and ammonia as part of the synthesis of IGP and AICAR. The resulting ammonia molecule is channeled to the active site of HisF. The polypeptide is Imidazole glycerol phosphate synthase subunit HisH (Geobacter metallireducens (strain ATCC 53774 / DSM 7210 / GS-15)).